The chain runs to 369 residues: Chorismate synthase (369 aa).

Arg48 and Arg54 together coordinate NADP(+). FMN contacts are provided by residues 125–127 (RSS), 238–239 (NA), Gly278, 293–297 (KPTSS), and Arg319.

Belongs to the chorismate synthase family. As to quaternary structure, homotetramer. The cofactor is FMNH2.

It catalyses the reaction 5-O-(1-carboxyvinyl)-3-phosphoshikimate = chorismate + phosphate. It functions in the pathway metabolic intermediate biosynthesis; chorismate biosynthesis; chorismate from D-erythrose 4-phosphate and phosphoenolpyruvate: step 7/7. Its function is as follows. Catalyzes the anti-1,4-elimination of the C-3 phosphate and the C-6 proR hydrogen from 5-enolpyruvylshikimate-3-phosphate (EPSP) to yield chorismate, which is the branch point compound that serves as the starting substrate for the three terminal pathways of aromatic amino acid biosynthesis. This reaction introduces a second double bond into the aromatic ring system. The sequence is that of Chorismate synthase from Burkholderia pseudomallei (strain 1106a).